The following is a 189-amino-acid chain: Putative biopolymer transport protein ExbB-like 1 (189 aa).

3 consecutive transmembrane segments (helical) span residues 14-34 (FVTT…LWVF), 99-119 (LVVL…GTVV), and 147-167 (LIAT…YLIL).

The protein belongs to the ExbB/TolQ family.

The protein localises to the cell inner membrane. The chain is Putative biopolymer transport protein ExbB-like 1 from Helicobacter pylori (strain ATCC 700392 / 26695) (Campylobacter pylori).